We begin with the raw amino-acid sequence, 122 residues long: Large ribosomal subunit protein uL14c (122 aa).

It belongs to the universal ribosomal protein uL14 family. As to quaternary structure, part of the 50S ribosomal subunit.

It localises to the plastid. Its subcellular location is the chloroplast. Binds to 23S rRNA. This is Large ribosomal subunit protein uL14c from Daucus carota (Wild carrot).